The primary structure comprises 110 residues: Small ribosomal subunit protein eS24 (110 aa).

A disordered region spans residues R91–E110. Acidic residues predominate over residues Q97–E110.

Belongs to the eukaryotic ribosomal protein eS24 family.

This chain is Small ribosomal subunit protein eS24, found in Archaeoglobus fulgidus (strain ATCC 49558 / DSM 4304 / JCM 9628 / NBRC 100126 / VC-16).